The sequence spans 447 residues: Cobyrinate a,c-diamide synthase (447 aa).

Residues 247 to 435 (RIGVAIDEAF…IHIHAASCPQ (189 aa)) form the GATase cobBQ-type domain. C329 functions as the Nucleophile in the catalytic mechanism.

This sequence belongs to the CobB/CbiA family. It depends on Mg(2+) as a cofactor.

It carries out the reaction cob(II)yrinate + 2 L-glutamine + 2 ATP + 2 H2O = cob(II)yrinate a,c diamide + 2 L-glutamate + 2 ADP + 2 phosphate + 2 H(+). The enzyme catalyses Ni-sirohydrochlorin + 2 L-glutamine + 2 ATP + 2 H2O = Ni-sirohydrochlorin a,c-diamide + 2 L-glutamate + 2 ADP + 2 phosphate + 2 H(+). It participates in cofactor biosynthesis; adenosylcobalamin biosynthesis; cob(II)yrinate a,c-diamide from sirohydrochlorin (anaerobic route): step 10/10. Catalyzes the ATP-dependent amidation of the two carboxylate groups at positions a and c of cobyrinate, using either L-glutamine or ammonia as the nitrogen source. Involved in the biosynthesis of the unique nickel-containing tetrapyrrole coenzyme F430, the prosthetic group of methyl-coenzyme M reductase (MCR), which plays a key role in methanogenesis and anaerobic methane oxidation. Catalyzes the ATP-dependent amidation of the two carboxylate groups at positions a and c of Ni-sirohydrochlorin, using L-glutamine or ammonia as the nitrogen source. This chain is Cobyrinate a,c-diamide synthase, found in Methanothermobacter thermautotrophicus (strain ATCC 29096 / DSM 1053 / JCM 10044 / NBRC 100330 / Delta H) (Methanobacterium thermoautotrophicum).